Consider the following 220-residue polypeptide: Charged multivesicular body protein 2a (220 aa).

2 coiled-coil regions span residues 12-53 and 198-219; these read EELL…MAKQ and EATA…NLRR. The interval 196–220 is disordered; that stretch reads KGEATAALADADADLEERLNNLRRD. An MIT-interacting motif motif is present at residues 208-218; that stretch reads ADLEERLNNLR. The segment covering 211–220 has biased composition (basic and acidic residues); the sequence is EERLNNLRRD.

The protein belongs to the SNF7 family. In terms of assembly, probable core component of the endosomal sorting required for transport complex III (ESCRT-III). ESCRT-III components are thought to multimerize to form a flat lattice on the perimeter membrane of the endosome.

It localises to the late endosome membrane. The protein resides in the cytoplasm. Functionally, probable core component of the endosomal sorting required for transport complex III (ESCRT-III) which is involved in multivesicular bodies (MVBs) formation and sorting of endosomal cargo proteins into MVBs. MVBs contain intraluminal vesicles (ILVs) that are generated by invagination and scission from the limiting membrane of the endosome and mostly are delivered to lysosomes enabling degradation of membrane proteins, such as stimulated growth factor receptors, lysosomal enzymes and lipids. The polypeptide is Charged multivesicular body protein 2a (chmp2a) (Xenopus laevis (African clawed frog)).